Consider the following 202-residue polypeptide: Ras-related protein Rab-24 (202 aa).

Residue 14–21 (GYASVGKT) coordinates GTP. Residues 35–43 (THTTIGGAF) carry the Effector region motif. Residues 61–65 (DTAGT) and 118–121 (TKLD) each bind GTP. S-geranylgeranyl cysteine attachment occurs at residues C201 and C202.

Belongs to the small GTPase superfamily. Rab family.

It localises to the endoplasmic reticulum-Golgi intermediate compartment. The protein localises to the endosome. Its subcellular location is the endoplasmic reticulum. The protein resides in the golgi apparatus. It is found in the membrane. Functionally, may be involved in autophagy-related processes. This Dictyostelium discoideum (Social amoeba) protein is Ras-related protein Rab-24 (rab24).